The following is a 372-amino-acid chain: Heat-inducible transcription repressor HrcA (372 aa).

Positions Tyr-300–Ile-334 are disordered.

It belongs to the HrcA family.

Its function is as follows. Negative regulator of class I heat shock genes (grpE-dnaK-dnaJ and groELS operons). Prevents heat-shock induction of these operons. This chain is Heat-inducible transcription repressor HrcA, found in Bifidobacterium longum (strain NCC 2705).